A 397-amino-acid polypeptide reads, in one-letter code: ATP-dependent RNA helicase RhlB (397 aa).

A Q motif motif is present at residues 8-36; that stretch reads TRFHDFNLAPELMHAIQDLGFPYCTPIQA. Positions 39–219 constitute a Helicase ATP-binding domain; sequence LGFTLKGKDA…KQWTTDPSIV (181 aa). An ATP-binding site is contributed by 52-59; sequence AQTGTGKT. Residues 165–168 carry the DEAD box motif; the sequence is DEAD. Residues 242 to 392 form the Helicase C-terminal domain; sequence DKYKLLYNLV…TPPTHLLRAV (151 aa).

The protein belongs to the DEAD box helicase family. RhlB subfamily. In terms of assembly, component of the RNA degradosome, which is a multiprotein complex involved in RNA processing and mRNA degradation.

Its subcellular location is the cytoplasm. The catalysed reaction is ATP + H2O = ADP + phosphate + H(+). In terms of biological role, DEAD-box RNA helicase involved in RNA degradation. Has RNA-dependent ATPase activity and unwinds double-stranded RNA. This is ATP-dependent RNA helicase RhlB from Pseudomonas syringae pv. tomato (strain ATCC BAA-871 / DC3000).